The sequence spans 266 residues: Undecaprenyl-diphosphatase (266 aa).

7 consecutive transmembrane segments (helical) span residues 38–58 (SDMFNIVIQAGAILAVTIIYW), 80–100 (LIVAFLITAVLGLVVKKVLHF), 108–128 (PIAWALIIGGFWMIFAEWAAA), 136–156 (ITWLVAILVGIAQIVAGIFPG), 176–196 (AAATEFAFLVGIPTMYAASGY), 217–237 (IAFVVSTIVAFIAVKWLLAYI), and 245–265 (FAVYRIILGVLLLGMAATGLI).

The protein belongs to the UppP family.

Its subcellular location is the cell inner membrane. It carries out the reaction di-trans,octa-cis-undecaprenyl diphosphate + H2O = di-trans,octa-cis-undecaprenyl phosphate + phosphate + H(+). In terms of biological role, catalyzes the dephosphorylation of undecaprenyl diphosphate (UPP). Confers resistance to bacitracin. This is Undecaprenyl-diphosphatase from Rhizobium leguminosarum bv. trifolii (strain WSM2304).